The primary structure comprises 47 residues: Cytochrome b559 subunit beta (47 aa).

The helical transmembrane segment at 22 to 38 threads the bilayer; that stretch reads WLAVHTLAIPTVFFLGA. Histidine 26 contacts heme.

This sequence belongs to the PsbE/PsbF family. As to quaternary structure, heterodimer of an alpha subunit and a beta subunit. PSII is composed of 1 copy each of membrane proteins PsbA, PsbB, PsbC, PsbD, PsbE, PsbF, PsbH, PsbI, PsbJ, PsbK, PsbL, PsbM, PsbT, PsbX, PsbY, PsbZ, Psb30/Ycf12, peripheral proteins PsbO, CyanoQ (PsbQ), PsbU, PsbV and a large number of cofactors. It forms dimeric complexes. Requires heme b as cofactor.

Its subcellular location is the cellular thylakoid membrane. This b-type cytochrome is tightly associated with the reaction center of photosystem II (PSII). PSII is a light-driven water:plastoquinone oxidoreductase that uses light energy to abstract electrons from H(2)O, generating O(2) and a proton gradient subsequently used for ATP formation. It consists of a core antenna complex that captures photons, and an electron transfer chain that converts photonic excitation into a charge separation. The protein is Cytochrome b559 subunit beta of Synechococcus sp. (strain JA-3-3Ab) (Cyanobacteria bacterium Yellowstone A-Prime).